The primary structure comprises 108 residues: LBH domain-containing protein 2 (108 aa).

Pro residues predominate over residues 1 to 11 (MSTPRPAPPQP). Residues 1-108 (MSTPRPAPPQ…SEDPAAPARG (108 aa)) form a disordered region. One can recognise an LBH domain in the interval 37–62 (QRLPSIVVEPSEADPVESGELRWPLE). Residues 63–85 (SAQRGPSQSRAAAAPSPSLPGEP) show a composition bias toward low complexity.

The polypeptide is LBH domain-containing protein 2 (Homo sapiens (Human)).